Here is a 169-residue protein sequence, read N- to C-terminus: Ferric-chelate reductase (NAD(P)H) (169 aa).

Tyr7 lines the NADP(+) pocket. FMN is bound by residues 27-31, 45-52, 82-84, and Lys89; these read QIANT, CLNKENDT, and RKS. Residues His126 and 147–154 each bind NADP(+); that span reads YADYHLMK.

This sequence belongs to the non-flavoprotein flavin reductase family. Homodimer. It depends on FMN as a cofactor. FAD is required as a cofactor.

The catalysed reaction is 2 a Fe(II)-siderophore + NAD(+) + H(+) = 2 a Fe(III)-siderophore + NADH. It carries out the reaction 2 a Fe(II)-siderophore + NADP(+) + H(+) = 2 a Fe(III)-siderophore + NADPH. Its function is as follows. Catalyzes the reduction of bound ferric iron (Fe(3+)) in a variety of iron chelators (siderophores) using NAD(P)H as the electron donor, resulting in the release of Fe(2+). Not active with uncomplexed Fe(3+). Also reduces FMN and FAD, but not riboflavin. This Archaeoglobus fulgidus (strain ATCC 49558 / DSM 4304 / JCM 9628 / NBRC 100126 / VC-16) protein is Ferric-chelate reductase (NAD(P)H).